The primary structure comprises 193 residues: Protein TEX261 (193 aa).

The next 5 helical transmembrane spans lie at 1-21 (MVGVTLANVLPVCLALLPPPA), 39-59 (SRIIKYMIWFSTAVLIGLYVF), 67-87 (IGVGLFTNLVYFGLLQTFPFI), 94-114 (FILSCGLVVVNHYLAFQFFAE), and 122-142 (VLAYFTFCLWIIPFAFFVSLS).

This sequence belongs to the SVP26 family.

The protein localises to the membrane. This is Protein TEX261 (TEX261) from Bos taurus (Bovine).